A 467-amino-acid polypeptide reads, in one-letter code: Putative ankyrin repeat protein R911 (467 aa).

ANK repeat units follow at residues 38 to 70, 79 to 108, 109 to 138, 140 to 168, 170 to 198, 199 to 228, 229 to 258, 260 to 288, 289 to 318, 320 to 348, 350 to 378, 379 to 408, 410 to 438, and 440 to 467; these read IKTD…PIIV, TLNK…DIRA, GNDY…DIRA, NDYA…NIRA, NDHA…DIRS, DNDY…NIRS, DNDY…DIKS, NDYA…NIRV, NNNY…DIIA, NNFA…DIKS, NDYA…DIRV, ENDY…DIRS, NDYA…DIKA, and DDYA…AVLS.

The protein is Putative ankyrin repeat protein R911 of Acanthamoeba polyphaga mimivirus (APMV).